A 180-amino-acid polypeptide reads, in one-letter code: Uterocalin (180 aa).

Positions Met-1–Ala-18 are cleaved as a signal peptide. Cys-82 and Cys-175 are disulfide-bonded. Asn-101 is a glycosylation site (N-linked (GlcNAc...) asparagine).

It belongs to the calycin superfamily. Lipocalin family. As to expression, expressed in glandular and lumenal epithelia of the endometrium. Is transferred to the embryonic capsule, the conceptus and the yolk sac.

The protein resides in the secreted. Functionally, binds fatty acids and retinol. Is specialized for the preattachment embryo. May be important to maintain the pregnancy and may transport small hydrophobic ligands from mother to the developing embryo. This chain is Uterocalin, found in Equus caballus (Horse).